A 248-amino-acid chain; its full sequence is 1-(5-phosphoribosyl)-5-[(5-phosphoribosylamino)methylideneamino] imidazole-4-carboxamide isomerase (248 aa).

Aspartate 8 (proton acceptor) is an active-site residue. Aspartate 129 acts as the Proton donor in catalysis.

It belongs to the HisA/HisF family.

The protein localises to the cytoplasm. It catalyses the reaction 1-(5-phospho-beta-D-ribosyl)-5-[(5-phospho-beta-D-ribosylamino)methylideneamino]imidazole-4-carboxamide = 5-[(5-phospho-1-deoxy-D-ribulos-1-ylimino)methylamino]-1-(5-phospho-beta-D-ribosyl)imidazole-4-carboxamide. It functions in the pathway amino-acid biosynthesis; L-histidine biosynthesis; L-histidine from 5-phospho-alpha-D-ribose 1-diphosphate: step 4/9. The polypeptide is 1-(5-phosphoribosyl)-5-[(5-phosphoribosylamino)methylideneamino] imidazole-4-carboxamide isomerase (Rhizobium johnstonii (strain DSM 114642 / LMG 32736 / 3841) (Rhizobium leguminosarum bv. viciae)).